Reading from the N-terminus, the 1260-residue chain is uncharacterized protein (1260 aa).

It is found in the plastid. The protein localises to the chloroplast. This is an uncharacterized protein from Ostreococcus tauri.